The primary structure comprises 535 residues: ATP-dependent RNA helicase DBP3 (535 aa).

Residues Met1–Lys21 are compositionally biased toward basic and acidic residues. The interval Met1 to Ser82 is disordered. The span at Ser22–Lys33 shows a compositional bias: basic residues. Basic and acidic residues predominate over residues Asp34 to Thr72. The Q motif motif lies at Leu125–Ala151. The Helicase ATP-binding domain occupies Trp154–Val327. Position 167-174 (Ala167–Thr174) interacts with ATP. The DEAD box motif lies at Asp274–Asp277. The Helicase C-terminal domain maps to Lys352–Gly505.

It belongs to the DEAD box helicase family. DDX5/DBP2 subfamily.

Its subcellular location is the nucleus. The protein localises to the nucleolus. The enzyme catalyses ATP + H2O = ADP + phosphate + H(+). Functionally, ATP-dependent RNA helicase required for 60S ribosomal subunit synthesis. Involved in efficient pre-rRNA processing, predominantly at site A3, which is necessary for the normal formation of 25S and 5.8S rRNAs. The protein is ATP-dependent RNA helicase DBP3 (DBP3) of Eremothecium gossypii (strain ATCC 10895 / CBS 109.51 / FGSC 9923 / NRRL Y-1056) (Yeast).